A 475-amino-acid polypeptide reads, in one-letter code: tRNA-2-methylthio-N(6)-dimethylallyladenosine synthase (475 aa).

The segment covering 1–10 (MQETTVKRDG) has biased composition (basic and acidic residues). The disordered stretch occupies residues 1 to 22 (MQETTVKRDGASPSDAGTPATT). Residues 27–144 (GKLYIRTFGC…LPDLIKRRRA (118 aa)) enclose the MTTase N-terminal domain. Positions 36, 73, 107, 181, 185, and 188 each coordinate [4Fe-4S] cluster. In terms of domain architecture, Radical SAM core spans 167–400 (RVDGATAFVS…QALINQQAAA (234 aa)). Residues 403–466 (QGMIGTRQRV…TNSLRGRVAG (64 aa)) enclose the TRAM domain.

Belongs to the methylthiotransferase family. MiaB subfamily. As to quaternary structure, monomer. [4Fe-4S] cluster serves as cofactor.

It is found in the cytoplasm. It carries out the reaction N(6)-dimethylallyladenosine(37) in tRNA + (sulfur carrier)-SH + AH2 + 2 S-adenosyl-L-methionine = 2-methylsulfanyl-N(6)-dimethylallyladenosine(37) in tRNA + (sulfur carrier)-H + 5'-deoxyadenosine + L-methionine + A + S-adenosyl-L-homocysteine + 2 H(+). Catalyzes the methylthiolation of N6-(dimethylallyl)adenosine (i(6)A), leading to the formation of 2-methylthio-N6-(dimethylallyl)adenosine (ms(2)i(6)A) at position 37 in tRNAs that read codons beginning with uridine. This is tRNA-2-methylthio-N(6)-dimethylallyladenosine synthase from Bordetella parapertussis (strain 12822 / ATCC BAA-587 / NCTC 13253).